Reading from the N-terminus, the 148-residue chain is Protein ORM1 (148 aa).

The next 4 membrane-spanning stretches (helical) occupy residues 12-32 (WIIH…FPGV), 36-56 (WSWT…FHLI), 89-109 (FLII…HYDL), and 111-131 (MFSW…LPVT).

It to yeast YLR350W C-terminus.

It localises to the membrane. The polypeptide is Protein ORM1 (ORM1) (Saccharomyces pastorianus (strain ATCC 76670 / Carlsberg bottom yeast no.2 / CBS 1503 / CLIB 180 / NBRC 10610 / NRRL Y-1525) (Saaz-type lager yeast)).